The sequence spans 551 residues: Periplasmic [NiFe] hydrogenase large subunit (551 aa).

4 residues coordinate Ni(2+): Cys65, Cys68, Cys530, and Cys533. A propeptide spanning residues 537-551 (VIDPESNQVHKFRIL) is cleaved from the precursor.

It belongs to the [NiFe]/[NiFeSe] hydrogenase large subunit family. Heterodimer of a large and a small subunit. Requires Ni(2+) as cofactor.

Its subcellular location is the periplasm. It catalyses the reaction 2 Fe(III)-[cytochrome c3] + H2 = 2 Fe(II)-[cytochrome c3] + 2 H(+). The chain is Periplasmic [NiFe] hydrogenase large subunit (hydB) from Megalodesulfovibrio gigas (Desulfovibrio gigas).